A 461-amino-acid chain; its full sequence is tRNA modification GTPase MnmE (461 aa).

Positions 27, 89, and 128 each coordinate (6S)-5-formyl-5,6,7,8-tetrahydrofolate. The region spanning Gly224–Phe382 is the TrmE-type G domain. Asn234 is a K(+) binding site. GTP is bound by residues Asn234–Ser239, Thr253–Thr259, and Asp278–Gly281. A Mg(2+)-binding site is contributed by Ser238. K(+)-binding residues include Thr253, Val255, and Thr258. Thr259 lines the Mg(2+) pocket. Residue Lys461 participates in (6S)-5-formyl-5,6,7,8-tetrahydrofolate binding.

Belongs to the TRAFAC class TrmE-Era-EngA-EngB-Septin-like GTPase superfamily. TrmE GTPase family. In terms of assembly, homodimer. Heterotetramer of two MnmE and two MnmG subunits. Requires K(+) as cofactor.

Its subcellular location is the cytoplasm. Functionally, exhibits a very high intrinsic GTPase hydrolysis rate. Involved in the addition of a carboxymethylaminomethyl (cmnm) group at the wobble position (U34) of certain tRNAs, forming tRNA-cmnm(5)s(2)U34. The chain is tRNA modification GTPase MnmE from Lactobacillus delbrueckii subsp. bulgaricus (strain ATCC BAA-365 / Lb-18).